The primary structure comprises 236 residues: Leucyl/phenylalanyl-tRNA--protein transferase (236 aa).

The protein belongs to the L/F-transferase family.

The protein localises to the cytoplasm. It catalyses the reaction N-terminal L-lysyl-[protein] + L-leucyl-tRNA(Leu) = N-terminal L-leucyl-L-lysyl-[protein] + tRNA(Leu) + H(+). It carries out the reaction N-terminal L-arginyl-[protein] + L-leucyl-tRNA(Leu) = N-terminal L-leucyl-L-arginyl-[protein] + tRNA(Leu) + H(+). The enzyme catalyses L-phenylalanyl-tRNA(Phe) + an N-terminal L-alpha-aminoacyl-[protein] = an N-terminal L-phenylalanyl-L-alpha-aminoacyl-[protein] + tRNA(Phe). In terms of biological role, functions in the N-end rule pathway of protein degradation where it conjugates Leu, Phe and, less efficiently, Met from aminoacyl-tRNAs to the N-termini of proteins containing an N-terminal arginine or lysine. This chain is Leucyl/phenylalanyl-tRNA--protein transferase, found in Shewanella pealeana (strain ATCC 700345 / ANG-SQ1).